We begin with the raw amino-acid sequence, 517 residues long: Cobyric acid synthase (517 aa).

Residues 253 to 453 (EVEIAVIKLP…IHGILDNDSL (201 aa)) form the GATase cobBQ-type domain. Residue C334 is the Nucleophile of the active site. The active site involves H445.

Belongs to the CobB/CobQ family. CobQ subfamily.

The protein operates within cofactor biosynthesis; adenosylcobalamin biosynthesis. Functionally, catalyzes amidations at positions B, D, E, and G on adenosylcobyrinic A,C-diamide. NH(2) groups are provided by glutamine, and one molecule of ATP is hydrogenolyzed for each amidation. This chain is Cobyric acid synthase, found in Moorella thermoacetica (strain ATCC 39073 / JCM 9320).